A 306-amino-acid chain; its full sequence is Non-homologous end joining protein Ku 2 (306 aa).

A Ku domain is found at 21 to 206 (ISFGLVNIGV…EVSKQEIDMA (186 aa)). The tract at residues 233-306 (LIDAKTKGTK…GSRDKTRKRA (74 aa)) is disordered. The segment covering 274-290 (RTSRRKTTASASRRRSS) has biased composition (basic residues). Residues 291–300 (SNREKTGSRD) show a composition bias toward basic and acidic residues.

The protein belongs to the prokaryotic Ku family. As to quaternary structure, homodimer. Interacts with LigD.

In terms of biological role, with LigD forms a non-homologous end joining (NHEJ) DNA repair enzyme, which repairs dsDNA breaks with reduced fidelity. Binds linear dsDNA with 5'- and 3'- overhangs but not closed circular dsDNA nor ssDNA. Recruits and stimulates the ligase activity of LigD. The chain is Non-homologous end joining protein Ku 2 from Saccharopolyspora erythraea (strain ATCC 11635 / DSM 40517 / JCM 4748 / NBRC 13426 / NCIMB 8594 / NRRL 2338).